The following is a 401-amino-acid chain: 3-hydroxyisobutyryl-CoA hydrolase-like protein 1, mitochondrial (401 aa).

Residues 1 to 26 (MHNAKGLLGRIVRDKLWRFGYRRSLC) constitute a mitochondrion transit peptide.

This sequence belongs to the enoyl-CoA hydratase/isomerase family.

It localises to the mitochondrion. This Arabidopsis thaliana (Mouse-ear cress) protein is 3-hydroxyisobutyryl-CoA hydrolase-like protein 1, mitochondrial.